The chain runs to 562 residues: Oligo-1,6-glucosidase (562 aa).

The Ca(2+) site is built by aspartate 21, asparagine 23, aspartate 25, and aspartate 29. Aspartate 199 (nucleophile) is an active-site residue. Glutamate 256 acts as the Proton donor in catalysis.

The protein belongs to the glycosyl hydrolase 13 family.

It localises to the cytoplasm. The enzyme catalyses Hydrolysis of (1-&gt;6)-alpha-D-glucosidic linkages in some oligosaccharides produced from starch and glycogen by alpha-amylase, and in isomaltose.. The protein is Oligo-1,6-glucosidase (malL) of Parageobacillus thermoglucosidasius (Geobacillus thermoglucosidasius).